A 527-amino-acid chain; its full sequence is Protein SDS24 (527 aa).

Low complexity-rich tracts occupy residues 1-22 (MAST…LPTS) and 55-74 (TPPT…TPAP). Residues 1 to 75 (MASTSNTFPP…PGCAATPAPL (75 aa)) form a disordered region. At Ser94 the chain carries Phosphoserine. CBS domains follow at residues 114 to 175 (IEQN…KITV), 198 to 256 (LTPK…NARS), 283 to 342 (TSRQ…QYPL), and 443 to 512 (LNSH…GNKE). Positions 424 to 447 (AQSSANGATPMSKSSSSTSLNSHS) are enriched in low complexity. Disordered stretches follow at residues 424 to 478 (AQSS…TNTP) and 508 to 527 (TGNK…SIAM). Phosphoserine occurs at positions 458 and 524.

The protein belongs to the SDS23 family.

The protein resides in the cytoplasm. Its subcellular location is the nucleus. Involved in DNA replication and cell separation during budding. The polypeptide is Protein SDS24 (SDS24) (Saccharomyces cerevisiae (strain YJM789) (Baker's yeast)).